We begin with the raw amino-acid sequence, 740 residues long: Ion-translocating oxidoreductase complex subunit C (740 aa).

4Fe-4S ferredoxin-type domains lie at 369 to 397 (GEPQ…QQLY) and 407 to 436 (KATT…VQYF). C377, C380, C383, C387, C416, C419, C422, and C426 together coordinate [4Fe-4S] cluster. 2 disordered regions span residues 602 to 621 (KLEQ…PRKA) and 660 to 718 (ARAK…RKAA). Residues 611-621 (KPEEQVDPRKA) show a composition bias toward basic and acidic residues.

The protein belongs to the 4Fe4S bacterial-type ferredoxin family. RnfC subfamily. The complex is composed of six subunits: RsxA, RsxB, RsxC, RsxD, RsxE and RsxG. Requires [4Fe-4S] cluster as cofactor.

It is found in the cell inner membrane. Part of a membrane-bound complex that couples electron transfer with translocation of ions across the membrane. Required to maintain the reduced state of SoxR. This is Ion-translocating oxidoreductase complex subunit C from Escherichia coli O9:H4 (strain HS).